A 231-amino-acid chain; its full sequence is NADH-ubiquinone oxidoreductase chain 4 (231 aa).

The next 6 membrane-spanning stretches (helical) occupy residues 1–21, 34–54, 63–85, 89–111, 118–138, and 169–189; these read PIAG…YGII, MFLP…LTCL, IAYS…TPWG, AMAL…NTTY, ILIL…WWLL, and TIIL…HMFL.

This sequence belongs to the complex I subunit 4 family.

Its subcellular location is the mitochondrion membrane. It catalyses the reaction a ubiquinone + NADH + 5 H(+)(in) = a ubiquinol + NAD(+) + 4 H(+)(out). Functionally, core subunit of the mitochondrial membrane respiratory chain NADH dehydrogenase (Complex I) that is believed to belong to the minimal assembly required for catalysis. Complex I functions in the transfer of electrons from NADH to the respiratory chain. The immediate electron acceptor for the enzyme is believed to be ubiquinone. The polypeptide is NADH-ubiquinone oxidoreductase chain 4 (MT-ND4) (Trimeresurus cantori (Cantor's pit viper)).